The following is a 467-amino-acid chain: Glutamate--tRNA ligase (467 aa).

A 'HIGH' region motif is present at residues 10-20; the sequence is PSPTGYLHVGG. Zn(2+) contacts are provided by Cys99, Cys101, Cys126, and Glu128. The short motif at 237–241 is the 'KMSKS' region element; it reads RLSKR. Lys240 is a binding site for ATP.

The protein belongs to the class-I aminoacyl-tRNA synthetase family. Glutamate--tRNA ligase type 1 subfamily. Monomer. It depends on Zn(2+) as a cofactor.

The protein resides in the cytoplasm. The enzyme catalyses tRNA(Glu) + L-glutamate + ATP = L-glutamyl-tRNA(Glu) + AMP + diphosphate. Its function is as follows. Catalyzes the attachment of glutamate to tRNA(Glu) in a two-step reaction: glutamate is first activated by ATP to form Glu-AMP and then transferred to the acceptor end of tRNA(Glu). The sequence is that of Glutamate--tRNA ligase from Geotalea uraniireducens (strain Rf4) (Geobacter uraniireducens).